The following is a 457-amino-acid chain: 4-hydroxybenzoate transporter PcaK (457 aa).

Residues 1–34 are Cytoplasmic-facing; sequence MPKEANMASQDYATQRSSLDAQALINDAPLSRYQ. Residues 35-55 traverse the membrane as a helical segment; it reads WLIAIVCFLIVFVDGIDTAAM. The Periplasmic segment spans residues 56–72; sequence GFIAPALAQDWGVDRSQ. Residues 73–93 form a helical membrane-spanning segment; the sequence is LGPVMSAALGGMIIGALVSGP. The Cytoplasmic segment spans residues 94–101; the sequence is TADRFGRK. A helical membrane pass occupies residues 102-122; sequence IVLSMSMLVFGGFTLACAYST. At 123–128 the chain is on the periplasmic side; it reads NLDSLV. A helical transmembrane segment spans residues 129–149; it reads IFRFLTGIGLGAAMPNATTLF. At 150–168 the chain is on the cytoplasmic side; the sequence is SEYCPARIRSLLVTCMFCG. Residues 169–189 form a helical membrane-spanning segment; it reads YNLGMAIGGFISSWLIPAFGW. Over 190–191 the chain is Periplasmic; the sequence is HS. Residues 192 to 212 traverse the membrane as a helical segment; it reads LFLLGGWAPLILMLLVIFFLP. The Cytoplasmic portion of the chain corresponds to 213–274; sequence ESYRFLIVKG…LFSAKYVKGT (62 aa). A helical membrane pass occupies residues 275–295; it reads VLLWVTYFMGLVMIYLLTSWL. At 296 to 310 the chain is on the periplasmic side; the sequence is PTLMRETGASLERAA. Residues 311–331 form a helical membrane-spanning segment; that stretch reads FLGGLFQFGGVLSALFIGWAM. Residues 332–338 lie on the Cytoplasmic side of the membrane; the sequence is DRFNPNR. The chain crosses the membrane as a helical span at residues 339-359; the sequence is IIAGFYLAAGIFAVIVGQSLS. The Periplasmic portion of the chain corresponds to 360–363; that stretch reads NPTL. A helical membrane pass occupies residues 364–384; the sequence is LALFILCAGIAVNGAQSSMPV. The Cytoplasmic segment spans residues 385–400; it reads LSARFYPTQCRATGVA. A helical transmembrane segment spans residues 401–421; it reads WMSGIGRFGAVFGAWIGAVLL. The Periplasmic portion of the chain corresponds to 422–426; that stretch reads GNNWS. Residues 427–447 traverse the membrane as a helical segment; it reads FTMILSMLIIPAAAAAIAIFV. Residues 448 to 457 are Cytoplasmic-facing; it reads KSLVAHTDAT.

This sequence belongs to the major facilitator superfamily. Aromatic acid:H(+) symporter (AAHS) (TC 2.A.1.15) family. As to quaternary structure, homotrimer.

The protein resides in the cell inner membrane. Its function is as follows. Uptake of 4-hydroxybenzoate (4-HB). Can also transport a variety of aromatic acids with hydroxyl substitutions at the 2-, 3- and 4-positions, such as salicylate, 2,4-dihydroxybenzoate, protocatechuate, 3-hydroxybenzoate, vanillate and gentisate. This is 4-hydroxybenzoate transporter PcaK from Acinetobacter baylyi (strain ATCC 33305 / BD413 / ADP1).